The sequence spans 778 residues: ATP synthase subunit beta (778 aa).

The segment at 1-289 (MKENNKTIEA…IDIYEENEDL (289 aa)) is unknown. The interval 290 to 778 (MKLNTLKSDK…KPLNSENKSN (489 aa)) is ATP synthase subunit beta. Residue 447-454 (GGAGVGKT) participates in ATP binding.

It belongs to the ATPase alpha/beta chains family. As to quaternary structure, F-type ATPases have 2 components, CF(1) - the catalytic core - and CF(0) - the membrane proton channel. CF(1) has five subunits: alpha(3), beta(3), gamma(1), delta(1), epsilon(1). CF(0) has three main subunits: a(1), b(2) and c(9-12). The alpha and beta chains form an alternating ring which encloses part of the gamma chain. CF(1) is attached to CF(0) by a central stalk formed by the gamma and epsilon chains, while a peripheral stalk is formed by the delta and b chains.

Its subcellular location is the cell membrane. It catalyses the reaction ATP + H2O + 4 H(+)(in) = ADP + phosphate + 5 H(+)(out). Functionally, produces ATP from ADP in the presence of a proton gradient across the membrane. The catalytic sites are hosted primarily by the beta subunits. This Malacoplasma penetrans (strain HF-2) (Mycoplasma penetrans) protein is ATP synthase subunit beta (atpD).